Reading from the N-terminus, the 175-residue chain is ATP synthase subunit b 2 (175 aa).

A helical transmembrane segment spans residues 20 to 40 (LIFWTTITFVLVLIILKKIAW).

The protein belongs to the ATPase B chain family. In terms of assembly, F-type ATPases have 2 components, F(1) - the catalytic core - and F(0) - the membrane proton channel. F(1) has five subunits: alpha(3), beta(3), gamma(1), delta(1), epsilon(1). F(0) has four main subunits: a(1), b(2) and c(10-14). The alpha and beta chains form an alternating ring which encloses part of the gamma chain. F(1) is attached to F(0) by a central stalk formed by the gamma and epsilon chains, while a peripheral stalk is formed by the delta and b chains.

It localises to the cell inner membrane. F(1)F(0) ATP synthase produces ATP from ADP in the presence of a proton or sodium gradient. F-type ATPases consist of two structural domains, F(1) containing the extramembraneous catalytic core and F(0) containing the membrane proton channel, linked together by a central stalk and a peripheral stalk. During catalysis, ATP synthesis in the catalytic domain of F(1) is coupled via a rotary mechanism of the central stalk subunits to proton translocation. Functionally, component of the F(0) channel, it forms part of the peripheral stalk, linking F(1) to F(0). The sequence is that of ATP synthase subunit b 2 from Chlorobium luteolum (strain DSM 273 / BCRC 81028 / 2530) (Pelodictyon luteolum).